A 634-amino-acid chain; its full sequence is MSDAATRAEETSEGHSSSAIGLMVGAVGVCYGDIGTSPLYTLKEVFIGGYGVQANHDGVLGVLSLIFWSLVWVVSIKYVIFVLRADNQGEGGVMALSALARRAAAPFGRLQTFVVVAGLIGAALFYGDSMITPAISVLSAVEGLEIAFDGLEHWTVPLALIVLIGLFLIQKHGTARIGILFGPVMVLWFGALAALGVYGVIQQPEVLQAMNPVWAVRFFGSHPGIGVAILGATVLALTGAEALYADMGHFGRKPIARAWFLLVLPALVLNYFGQGATILSNAEAARNPFYLLAPGWALLPMVALSTLATVIASQAVISGAFSLTRQAIQLGYVPRMTIQHTSSHEQGQIYIGGVNWALMVGVVLLVLGFESSASLAAAYGVAVTGTMLITTLLMGVVIWRLWKWPLWLGVPFFCVMLAVDSLFFAANLPKVIQGGAFPVIAGIVIFILMSTWKRGRQLLVERLDEGSLPLSVFISSMRVQPPHRVQGTAVFLTARTDAVPHALLHNLLHNQVLHEQVVLLTVVNEDSPRVPPDRRFEVEAYGDGFFRVILHFGFMEEPDIPAALRLCHLNELDFSPMRTTYFLSRETVIPSKRIGMARWREGLFAFLLKNANGNLRYFNLPLNRVIELGTQVEI.

Transmembrane regions (helical) follow at residues 19-39 (AIGL…TSPL), 62-82 (VLSL…VIFV), 113-133 (FVVV…MITP), 150-170 (GLEH…FLIQ), 177-197 (IGIL…ALGV), 225-245 (IGVA…ALYA), 259-279 (WFLL…ATIL), 291-311 (LLAP…ATVI), 349-369 (IYIG…VLGF), 379-399 (YGVA…VVIW), 406-426 (LWLG…FFAA), and 431-451 (VIQG…LMST).

It belongs to the HAK/KUP transporter (TC 2.A.72) family.

The protein resides in the cell inner membrane. The catalysed reaction is K(+)(in) + H(+)(in) = K(+)(out) + H(+)(out). In terms of biological role, transport of potassium into the cell. Likely operates as a K(+):H(+) symporter. The protein is Probable potassium transport system protein Kup of Pseudomonas aeruginosa (strain UCBPP-PA14).